The sequence spans 857 residues: Cadherin-related family member 1a (857 aa).

A signal peptide spans 1–25 (MKNAREIQFSSFLLLAHFCFVGAQS). The Extracellular portion of the chain corresponds to 26-709 (DYAPYFYDNG…RENPMHFLGL (684 aa)). Cadherin domains are found at residues 40-139 (NGNM…RPQF), 140-252 (QNMP…PPIF), 253-359 (IGTP…PPTF), 365-478 (PQNV…APKF), 479-582 (TSDF…PPAF), and 574-693 (DLND…GPLT). A helical transmembrane segment spans residues 710-730 (ISGVILILVFVTVIISTVIFV). Residues 731 to 857 (RRNKANRILP…LEQKNMANRY (127 aa)) lie on the Cytoplasmic side of the membrane. Residues 746–765 (RKKRKPQKQDDFQEPFREEQ) form a disordered region. A compositionally biased stretch (basic and acidic residues) spans 752-765 (QKQDDFQEPFREEQ).

As to expression, expressed in photoreceptor cells of the outer nuclear layer of the retina and in the pinal gland.

It localises to the membrane. Potential calcium-dependent cell-adhesion protein. Plays a role in the organization of retinal cell layers and Muller glia morphology. This Danio rerio (Zebrafish) protein is Cadherin-related family member 1a.